The following is a 181-amino-acid chain: Peptidyl-prolyl cis-trans isomerase H (181 aa).

Positions 17–180 (FFDIALGGVP…QDVIITQCGE (164 aa)) constitute a PPIase cyclophilin-type domain.

This sequence belongs to the cyclophilin-type PPIase family. PPIase H subfamily.

It is found in the nucleus. It catalyses the reaction [protein]-peptidylproline (omega=180) = [protein]-peptidylproline (omega=0). In terms of biological role, PPIases accelerate the folding of proteins. It catalyzes the cis-trans isomerization of proline imidic peptide bonds in oligopeptides. The polypeptide is Peptidyl-prolyl cis-trans isomerase H (cyp3) (Aspergillus fumigatus (strain ATCC MYA-4609 / CBS 101355 / FGSC A1100 / Af293) (Neosartorya fumigata)).